We begin with the raw amino-acid sequence, 256 residues long: Diacetyl reductase [(S)-acetoin forming] (256 aa).

Residues 6–33 (LVTG…AIAD) and aspartate 59 contribute to the NAD(+) site. Residue serine 139 coordinates substrate. The active-site Proton acceptor is tyrosine 152. Lysine 156 contacts NAD(+).

This sequence belongs to the short-chain dehydrogenases/reductases (SDR) family. Homotetramer.

It carries out the reaction (S)-acetoin + NAD(+) = diacetyl + NADH + H(+). In terms of biological role, catalyzes the reversible reduction of (S)-acetoin to 2,3-butanediol in the presence of NADH. This chain is Diacetyl reductase [(S)-acetoin forming] (budC), found in Klebsiella pneumoniae.